Reading from the N-terminus, the 173-residue chain is MILGDRDLKYYLEKGWIVISPLTQDTIRENGVDLRVGGEIARFKKTDEIYEDGKDPRSFYEIEKGDEFIIYPNEHVLLVTEEYVKLPNDVMAFVNLRSSFARLGLFVPPTIVDAGFEGQLTIEVLGSAFPVKIKRGTRFLHLIFARTLTPVENPYHGKYQGQQGVTLPKFKFR.

Residues R97 to R102 and D113 each bind dCTP. E123 (proton donor/acceptor) is an active-site residue. The dCTP site is built by Y155 and Q162.

This sequence belongs to the dCTP deaminase family. As to quaternary structure, homotrimer.

It carries out the reaction dCTP + H2O + H(+) = dUTP + NH4(+). Its pathway is pyrimidine metabolism; dUMP biosynthesis; dUMP from dCTP (dUTP route): step 1/2. Its function is as follows. Catalyzes the deamination of dCTP to dUTP. The protein is dCTP deaminase of Acidianus ambivalens (Desulfurolobus ambivalens).